A 246-amino-acid chain; its full sequence is DNA repair protein RecO (246 aa).

The protein belongs to the RecO family.

Functionally, involved in DNA repair and RecF pathway recombination. The chain is DNA repair protein RecO from Methylorubrum extorquens (strain CM4 / NCIMB 13688) (Methylobacterium extorquens).